A 78-amino-acid chain; its full sequence is Broad mercury transporter MerE (78 aa).

2 helical membrane-spanning segments follow: residues Leu-19–Leu-39 and Phe-47–Val-67.

It localises to the cell inner membrane. In terms of biological role, broad mercury transporter that mediates the transport of both CH(3)Hg(I) and Hg(II) across the membrane. In Shigella flexneri, this protein is Broad mercury transporter MerE.